Consider the following 379-residue polypeptide: Chaperone protein DnaJ (379 aa).

Positions 5 to 69 (EYYERLGVDK…QKRAAYDQYG (65 aa)) constitute a J domain. The segment at 141-223 (GVEKQVKYNR…CHGSGHEKVA (83 aa)) adopts a CR-type zinc-finger fold. Zn(2+)-binding residues include Cys154, Cys157, Cys171, Cys174, Cys197, Cys200, Cys211, and Cys214. CXXCXGXG motif repeat units follow at residues 154 to 161 (CHTCGGSG), 171 to 178 (CHKCGGRG), 197 to 204 (CDVCNGTG), and 211 to 218 (CETCHGSG).

Belongs to the DnaJ family. As to quaternary structure, homodimer. Requires Zn(2+) as cofactor.

The protein localises to the cytoplasm. Its function is as follows. Participates actively in the response to hyperosmotic and heat shock by preventing the aggregation of stress-denatured proteins and by disaggregating proteins, also in an autonomous, DnaK-independent fashion. Unfolded proteins bind initially to DnaJ; upon interaction with the DnaJ-bound protein, DnaK hydrolyzes its bound ATP, resulting in the formation of a stable complex. GrpE releases ADP from DnaK; ATP binding to DnaK triggers the release of the substrate protein, thus completing the reaction cycle. Several rounds of ATP-dependent interactions between DnaJ, DnaK and GrpE are required for fully efficient folding. Also involved, together with DnaK and GrpE, in the DNA replication of plasmids through activation of initiation proteins. In Lactococcus lactis subsp. lactis (strain IL1403) (Streptococcus lactis), this protein is Chaperone protein DnaJ.